Consider the following 538-residue polypeptide: MEIKEISVPQQGVVADYMNGKKEIQSCFDYMLTEDAFKQRVQDLREREFFRQDLVAHLLEYNTKLQAGEATIQNVKALEDEDTYVVIAGQQAGLLTGPLYTIHKIISVLQLAKEKEESLGVKVVPVFWIAGEDHDMDEINHTFVTKNKKIKKTIFHDRNPKKASASESELSLEDCRKWIEEIFKTYPETNFTKDVLRFIDDSLRKSNTYVDFFGHLIMKMFMNSGLILVDSHHPELRKLEVPFFKQIVSKYKEVQEGLHNQQEVIKELGYKPIIETKSNAVHIFMEIDNERVLLEDNQRKFVGKDGTYSFSYEELIEEMERSPERFSNNVVTRPLMQEYVFPTLAFIGGPGELAYWSELQQVFHAIGFRMPPVVPRITITYIERDIATDLHDLQLQESDPFLNNVDKLRENWLSNQIEEPIDERFEEAKKEIIDIHKSLQQFVKKIDPGLSSFAGKNEFKINEQIELLERMLKRNVEKKHEVELNKFRRIQFAIRPLGAPQERVWNVCYYLNQFGLDFVDRVMEKPFSWDGKHHVIKL.

Residues 460–484 (KINEQIELLERMLKRNVEKKHEVEL) are a coiled coil.

Belongs to the BshC family.

Involved in bacillithiol (BSH) biosynthesis. May catalyze the last step of the pathway, the addition of cysteine to glucosamine malate (GlcN-Mal) to generate BSH. The chain is Putative cysteine ligase BshC from Bacillus cereus (strain AH187).